The following is a 357-amino-acid chain: MAIQSDSLSSRPDAPRLVAPAPASPNEESIERALRPKALQEYVGQQRAREQLEIFIAAARKRSEALDHVLLFGPPGLGKTTLAHIIAHEMGVQMRQTSGPVLERPGDLAALLTNLERNDVLFIDEIHRLSPVVEEILYPALEDFQIDILIGEGPAARSVKLDLQPFTLVGATTRAGMLTNPLRDRFGIVSRLEFYNTDDLAHIVTRSAGLLNADITPEGAREVARRARGTPRIANRLLRRVRDYAEVKAGGRIDTEAANQALAMLEVDPQGLDLMDRKLLEAIVHKFDGGPVGVDSLAAAIGEERDTIEDVIEPYLIQHGYLQRTPRGRMATQTTWRHLGLQPPSGSQPSSGDLFGA.

The span at 1–10 shows a compositional bias: polar residues; the sequence is MAIQSDSLSS. Positions 1–30 are disordered; it reads MAIQSDSLSSRPDAPRLVAPAPASPNEESI. Positions 5–195 are large ATPase domain (RuvB-L); the sequence is SDSLSSRPDA…FGIVSRLEFY (191 aa). Residues Leu-34, Arg-35, Gly-76, Lys-79, Thr-80, Thr-81, 142–144, Arg-185, Tyr-195, and Arg-232 contribute to the ATP site; that span reads EDF. Mg(2+) is bound at residue Thr-80. Positions 196–266 are small ATPAse domain (RuvB-S); the sequence is NTDDLAHIVT…AANQALAMLE (71 aa). A head domain (RuvB-H) region spans residues 269-357; sequence PQGLDLMDRK…QPSSGDLFGA (89 aa). 3 residues coordinate DNA: Arg-305, Arg-324, and Arg-329.

The protein belongs to the RuvB family. In terms of assembly, homohexamer. Forms an RuvA(8)-RuvB(12)-Holliday junction (HJ) complex. HJ DNA is sandwiched between 2 RuvA tetramers; dsDNA enters through RuvA and exits via RuvB. An RuvB hexamer assembles on each DNA strand where it exits the tetramer. Each RuvB hexamer is contacted by two RuvA subunits (via domain III) on 2 adjacent RuvB subunits; this complex drives branch migration. In the full resolvosome a probable DNA-RuvA(4)-RuvB(12)-RuvC(2) complex forms which resolves the HJ.

The protein resides in the cytoplasm. The catalysed reaction is ATP + H2O = ADP + phosphate + H(+). Functionally, the RuvA-RuvB-RuvC complex processes Holliday junction (HJ) DNA during genetic recombination and DNA repair, while the RuvA-RuvB complex plays an important role in the rescue of blocked DNA replication forks via replication fork reversal (RFR). RuvA specifically binds to HJ cruciform DNA, conferring on it an open structure. The RuvB hexamer acts as an ATP-dependent pump, pulling dsDNA into and through the RuvAB complex. RuvB forms 2 homohexamers on either side of HJ DNA bound by 1 or 2 RuvA tetramers; 4 subunits per hexamer contact DNA at a time. Coordinated motions by a converter formed by DNA-disengaged RuvB subunits stimulates ATP hydrolysis and nucleotide exchange. Immobilization of the converter enables RuvB to convert the ATP-contained energy into a lever motion, pulling 2 nucleotides of DNA out of the RuvA tetramer per ATP hydrolyzed, thus driving DNA branch migration. The RuvB motors rotate together with the DNA substrate, which together with the progressing nucleotide cycle form the mechanistic basis for DNA recombination by continuous HJ branch migration. Branch migration allows RuvC to scan DNA until it finds its consensus sequence, where it cleaves and resolves cruciform DNA. The chain is Holliday junction branch migration complex subunit RuvB from Bordetella avium (strain 197N).